The following is a 546-amino-acid chain: 3-(3-hydroxy-phenyl)propionate/3-hydroxycinnamic acid hydroxylase 2 (546 aa).

FAD-binding positions include 10-39 and 278-288; these read SVAI…VVER and FVAGRIALVGD.

It belongs to the PheA/TfdB FAD monooxygenase family. It depends on FAD as a cofactor.

It catalyses the reaction 3-(3-hydroxyphenyl)propanoate + NADH + O2 + H(+) = 3-(2,3-dihydroxyphenyl)propanoate + NAD(+) + H2O. The catalysed reaction is (2E)-3-(3-hydroxyphenyl)prop-2-enoate + NADH + O2 + H(+) = (2E)-3-(2,3-dihydroxyphenyl)prop-2-enoate + NAD(+) + H2O. It functions in the pathway aromatic compound metabolism; 3-phenylpropanoate degradation. Functionally, catalyzes the insertion of one atom of molecular oxygen into position 2 of the phenyl ring of 3-(3-hydroxyphenyl)propionate (3-HPP) and hydroxycinnamic acid (3HCI). This chain is 3-(3-hydroxy-phenyl)propionate/3-hydroxycinnamic acid hydroxylase 2, found in Burkholderia vietnamiensis (strain G4 / LMG 22486) (Burkholderia cepacia (strain R1808)).